Consider the following 74-residue polypeptide: Conotoxin Vt11.7 (74 aa).

The N-terminal stretch at 1-26 (MMFRLTSVGCFLLVIVLLNVAVLTNA) is a signal peptide. Disulfide bonds link Cys-28–Cys-42, Cys-35–Cys-47, Cys-41–Cys-51, and Cys-46–Cys-55. The propeptide occupies 62 to 74 (AHGHGLLRFWGQR).

Belongs to the conotoxin I2 superfamily. Expressed by the venom duct.

It localises to the secreted. The chain is Conotoxin Vt11.7 from Conus planorbis (Planorbis cone).